Consider the following 261-residue polypeptide: Cytosolic Fe-S cluster assembly factor Nubp2 homolog (261 aa).

Residue 14–21 (GKGGVGKS) participates in ATP binding. [4Fe-4S] cluster is bound by residues C188 and C191.

Belongs to the Mrp/NBP35 ATP-binding proteins family. NUBP2/CFD1 subfamily. Heterotetramer of 2 Nubp1 and 2 Nubp2 chains. The cofactor is [4Fe-4S] cluster.

The protein resides in the cytoplasm. Component of the cytosolic iron-sulfur (Fe/S) protein assembly (CIA) machinery. Required for maturation of extramitochondrial Fe-S proteins. The Nubp1-Nubp2 heterotetramer forms a Fe-S scaffold complex, mediating the de novo assembly of an Fe-S cluster and its transfer to target apoproteins. The chain is Cytosolic Fe-S cluster assembly factor Nubp2 homolog from Drosophila willistoni (Fruit fly).